A 572-amino-acid polypeptide reads, in one-letter code: Dihydroxy-acid dehydratase (572 aa).

Residue Cys54 participates in [2Fe-2S] cluster binding. Asp86 lines the Mg(2+) pocket. Cys127 serves as a coordination point for [2Fe-2S] cluster. Positions 128 and 129 each coordinate Mg(2+). Lys129 is subject to N6-carboxylysine. Cys199 serves as a coordination point for [2Fe-2S] cluster. Glu449 serves as a coordination point for Mg(2+). Ser475 (proton acceptor) is an active-site residue.

This sequence belongs to the IlvD/Edd family. Homodimer. [2Fe-2S] cluster serves as cofactor. The cofactor is Mg(2+).

It catalyses the reaction (2R)-2,3-dihydroxy-3-methylbutanoate = 3-methyl-2-oxobutanoate + H2O. It carries out the reaction (2R,3R)-2,3-dihydroxy-3-methylpentanoate = (S)-3-methyl-2-oxopentanoate + H2O. It participates in amino-acid biosynthesis; L-isoleucine biosynthesis; L-isoleucine from 2-oxobutanoate: step 3/4. Its pathway is amino-acid biosynthesis; L-valine biosynthesis; L-valine from pyruvate: step 3/4. Functions in the biosynthesis of branched-chain amino acids. Catalyzes the dehydration of (2R,3R)-2,3-dihydroxy-3-methylpentanoate (2,3-dihydroxy-3-methylvalerate) into 2-oxo-3-methylpentanoate (2-oxo-3-methylvalerate) and of (2R)-2,3-dihydroxy-3-methylbutanoate (2,3-dihydroxyisovalerate) into 2-oxo-3-methylbutanoate (2-oxoisovalerate), the penultimate precursor to L-isoleucine and L-valine, respectively. The polypeptide is Dihydroxy-acid dehydratase (Pelagibacter ubique (strain HTCC1062)).